A 215-amino-acid chain; its full sequence is Large ribosomal subunit protein uL3 (215 aa).

Q153 carries the post-translational modification N5-methylglutamine.

Belongs to the universal ribosomal protein uL3 family. As to quaternary structure, part of the 50S ribosomal subunit. Forms a cluster with proteins L14 and L19. In terms of processing, methylated by PrmB.

Its function is as follows. One of the primary rRNA binding proteins, it binds directly near the 3'-end of the 23S rRNA, where it nucleates assembly of the 50S subunit. This is Large ribosomal subunit protein uL3 from Nitrosococcus oceani (strain ATCC 19707 / BCRC 17464 / JCM 30415 / NCIMB 11848 / C-107).